We begin with the raw amino-acid sequence, 317 residues long: uncharacterized protein (317 aa).

7 helical membrane passes run 24–44 (ISII…TGIM), 63–83 (LSIS…SILA), 136–156 (LGVA…ISED), 187–207 (LIPI…IGFF), 229–249 (ILAL…GGFL), 252–272 (GILS…LTFS), and 295–315 (IVMV…AGLL).

This sequence to M.jannaschii MJ0880, MJ1556 and MJ1589.

The protein resides in the cell membrane. This is an uncharacterized protein from Methanocaldococcus jannaschii (strain ATCC 43067 / DSM 2661 / JAL-1 / JCM 10045 / NBRC 100440) (Methanococcus jannaschii).